We begin with the raw amino-acid sequence, 394 residues long: Cell division protein FtsZ (394 aa).

Residues 21-25, R29, 108-110, E139, R143, N166, and D187 contribute to the GTP site; these read GGGNN and GTG. The interval 317–394 is disordered; sequence DKPSSQGRKA…EERRSRRTRR (78 aa). 2 stretches are compositionally biased toward low complexity: residues 328-346 and 353-364; these read STGF…SGAS and SAHTSHSQSSES. Residues 365 to 388 are compositionally biased toward basic and acidic residues; it reads VSERSHTTKDDDIPSFIRNREERR.

The protein belongs to the FtsZ family. In terms of assembly, homodimer. Polymerizes to form a dynamic ring structure in a strictly GTP-dependent manner. Interacts directly with several other division proteins.

It localises to the cytoplasm. In terms of biological role, essential cell division protein that forms a contractile ring structure (Z ring) at the future cell division site. The regulation of the ring assembly controls the timing and the location of cell division. One of the functions of the FtsZ ring is to recruit other cell division proteins to the septum to produce a new cell wall between the dividing cells. Binds GTP and shows GTPase activity. In Staphylococcus epidermidis (strain ATCC 35984 / DSM 28319 / BCRC 17069 / CCUG 31568 / BM 3577 / RP62A), this protein is Cell division protein FtsZ.